We begin with the raw amino-acid sequence, 764 residues long: Subtilisin-like protease SBT3.1 (764 aa).

An N-terminal signal peptide occupies residues 1-32 (MIQTLKTDSSFRLCFAAIAFGFVFIMNGKLSS). Positions 33-120 (GTTPHEFPVY…LLENRKLGLQ (88 aa)) are cleaved as a propeptide — activation peptide. The Inhibitor I9 domain occupies 41-116 (VYIFYLGERK…EVIILLENRK (76 aa)). Asn-76 is a glycosylation site (N-linked (GlcNAc...) asparagine). A Peptidase S8 domain is found at 124 to 610 (TWDYLGQFST…GGLVNLEKAT (487 aa)). The active-site Charge relay system is the Asp-156. A glycan (N-linked (GlcNAc...) asparagine) is linked at Asn-216. His-230 (charge relay system) is an active-site residue. Residues Asn-245 and Asn-374 are each glycosylated (N-linked (GlcNAc...) asparagine). Residue Ser-541 is the Charge relay system of the active site. N-linked (GlcNAc...) asparagine glycans are attached at residues Asn-674, Asn-711, and Asn-747.

Belongs to the peptidase S8 family.

Its subcellular location is the secreted. This is Subtilisin-like protease SBT3.1 from Arabidopsis thaliana (Mouse-ear cress).